The sequence spans 203 residues: Acireductone dioxygenase 3 (203 aa).

Positions 96, 98, 102, and 141 each coordinate Fe(2+). Ni(2+)-binding residues include histidine 96, histidine 98, glutamate 102, and histidine 141.

This sequence belongs to the acireductone dioxygenase (ARD) family. It depends on Fe(2+) as a cofactor. Requires Ni(2+) as cofactor.

It is found in the cytoplasm. It localises to the nucleus. The enzyme catalyses 1,2-dihydroxy-5-(methylsulfanyl)pent-1-en-3-one + O2 = 4-methylsulfanyl-2-oxobutanoate + formate + 2 H(+). It catalyses the reaction 1,2-dihydroxy-5-(methylsulfanyl)pent-1-en-3-one + O2 = 3-(methylsulfanyl)propanoate + CO + formate + 2 H(+). It participates in amino-acid biosynthesis; L-methionine biosynthesis via salvage pathway; L-methionine from S-methyl-5-thio-alpha-D-ribose 1-phosphate: step 5/6. Its function is as follows. Catalyzes 2 different reactions between oxygen and the acireductone 1,2-dihydroxy-3-keto-5-methylthiopentene (DHK-MTPene) depending upon the metal bound in the active site. Fe-containing acireductone dioxygenase (Fe-ARD) produces formate and 2-keto-4-methylthiobutyrate (KMTB), the alpha-ketoacid precursor of methionine in the methionine recycle pathway. Ni-containing acireductone dioxygenase (Ni-ARD) produces methylthiopropionate, carbon monoxide and formate, and does not lie on the methionine recycle pathway. This chain is Acireductone dioxygenase 3, found in Physcomitrium patens (Spreading-leaved earth moss).